The following is a 301-amino-acid chain: Methionyl-tRNA formyltransferase (301 aa).

(6S)-5,6,7,8-tetrahydrofolate is bound at residue 109 to 112 (SLLP).

The protein belongs to the Fmt family.

The enzyme catalyses L-methionyl-tRNA(fMet) + (6R)-10-formyltetrahydrofolate = N-formyl-L-methionyl-tRNA(fMet) + (6S)-5,6,7,8-tetrahydrofolate + H(+). In terms of biological role, attaches a formyl group to the free amino group of methionyl-tRNA(fMet). The formyl group appears to play a dual role in the initiator identity of N-formylmethionyl-tRNA by promoting its recognition by IF2 and preventing the misappropriation of this tRNA by the elongation apparatus. The protein is Methionyl-tRNA formyltransferase of Ruegeria pomeroyi (strain ATCC 700808 / DSM 15171 / DSS-3) (Silicibacter pomeroyi).